A 299-amino-acid polypeptide reads, in one-letter code: Oxygen-dependent coproporphyrinogen-III oxidase (299 aa).

Position 92 (Ser92) interacts with substrate. His96 and His106 together coordinate a divalent metal cation. The active-site Proton donor is the His106. A substrate-binding site is contributed by 108-110; the sequence is NVR. Residues His145 and His175 each contribute to the a divalent metal cation site. The segment at 240–275 is important for dimerization; sequence YVEFNLVWDRGTLFGLQTGGRTESILMSMPPLVRWE. 258–260 contributes to the substrate binding site; the sequence is GGR.

It belongs to the aerobic coproporphyrinogen-III oxidase family. In terms of assembly, homodimer. Requires a divalent metal cation as cofactor.

It localises to the cytoplasm. It catalyses the reaction coproporphyrinogen III + O2 + 2 H(+) = protoporphyrinogen IX + 2 CO2 + 2 H2O. It participates in porphyrin-containing compound metabolism; protoporphyrin-IX biosynthesis; protoporphyrinogen-IX from coproporphyrinogen-III (O2 route): step 1/1. Functionally, involved in the heme biosynthesis. Catalyzes the aerobic oxidative decarboxylation of propionate groups of rings A and B of coproporphyrinogen-III to yield the vinyl groups in protoporphyrinogen-IX. This Salmonella heidelberg (strain SL476) protein is Oxygen-dependent coproporphyrinogen-III oxidase.